The primary structure comprises 258 residues: Aquaporin PIP1-2 (258 aa).

The segment at 1–37 is disordered; sequence MEGKEEDVRLGANKFTERQPIGTAAQSQDKDYKEPPP. Residues 1–55 lie on the Cytoplasmic side of the membrane; the sequence is MEGKEEDVRLGANKFTERQPIGTAAQSQDKDYKEPPPAPLFEPGELSSWSFYRAG. Residues 56-76 traverse the membrane as a helical segment; sequence IAEFVATFLFLYITILTVMGV. Residues 77–89 are Extracellular-facing; it reads VKSSTKCSTVGIQ. A helical membrane pass occupies residues 90-110; the sequence is GIAWAFGGMIFALVYCTAGIS. Topologically, residues 111-133 are cytoplasmic; the sequence is GGHINPAVTFGLFLARKLSLTRA. Residues 115-117 carry the NPA 1 motif; it reads NPA. Residues 134–154 form a helical membrane-spanning segment; sequence LFYMVMQCLGAICGAGVVKGF. Over 155 to 175 the chain is Extracellular; sequence QKGLYENNGGGANVVAPGYTK. A helical membrane pass occupies residues 176–196; that stretch reads GDGLGAEIVGTFILVYTVFSA. The Cytoplasmic portion of the chain corresponds to 197 to 209; that stretch reads TDAKRSARDSHVP. A helical transmembrane segment spans residues 210-230; the sequence is ILAPLPIGFAVFLVHLATIPI. Topologically, residues 231–258 are extracellular; sequence TGTGINPARSLGAAIIYNKGHAWDDHWI. The NPA 2 motif lies at 236-238; sequence NPA.

This sequence belongs to the MIP/aquaporin (TC 1.A.8) family. PIP (TC 1.A.8.11) subfamily. In terms of tissue distribution, barely detectable in roots, leaves and fruits.

It localises to the cell membrane. In terms of biological role, water channel required to facilitate the transport of water across cell membrane; mercury-insensitive. Contributes to the tolerance to multiple abiotic stresses including salt (NaCl), cold and water deprivation, by modulating cytosolic K(+)/Na(+) ratio, maintaining osmotic balance, and reducing membrane injury (e.g. oxidative injury). The sequence is that of Aquaporin PIP1-2 from Musa acuminata (Banana).